A 149-amino-acid chain; its full sequence is Glycine cleavage system H protein (149 aa).

Residues 23–104 (LIWVGISNHA…PYGIWLFKIN (82 aa)) form the Lipoyl-binding domain. Position 64 is an N6-lipoyllysine (lysine 64).

Belongs to the GcvH family. As to quaternary structure, the glycine cleavage system is composed of four proteins: P, T, L and H. (R)-lipoate is required as a cofactor.

Its function is as follows. The glycine cleavage system catalyzes the degradation of glycine. The H protein shuttles the methylamine group of glycine from the P protein to the T protein. In Polynucleobacter necessarius subsp. necessarius (strain STIR1), this protein is Glycine cleavage system H protein.